Consider the following 704-residue polypeptide: D-(-)-3-hydroxybutyrate oligomer hydrolase (704 aa).

A signal peptide spans Met-1 to Ala-31. Ser-309 functions as the Charge relay system in the catalytic mechanism.

The protein belongs to the D-(-)-3-hydroxybutyrate oligomer hydrolase family.

Its subcellular location is the secreted. The catalysed reaction is (3R)-hydroxybutanoate dimer + H2O = 2 (R)-3-hydroxybutanoate + H(+). Its pathway is lipid metabolism; butanoate metabolism. In terms of biological role, participates in the degradation of poly-3-hydroxybutyrate (PHB). It works downstream of poly(3-hydroxybutyrate) depolymerase, hydrolyzing D(-)-3-hydroxybutyrate oligomers of various length (3HB-oligomers) into 3HB-monomers. In Albidiferax ferrireducens (strain ATCC BAA-621 / DSM 15236 / T118) (Rhodoferax ferrireducens), this protein is D-(-)-3-hydroxybutyrate oligomer hydrolase.